The primary structure comprises 94 residues: MEGKGRVLVQLLMLACVLEVSLCQHWSYGWLPGGKRSVGEVEATFRMMDSGDAVLSIPMDSPMERLSPIHIVSEVDAEGLPLKEQRFPNRRGRD.

An N-terminal signal peptide occupies residues 1–23 (MEGKGRVLVQLLMLACVLEVSLC). Glutamine 24 bears the Pyrrolidone carboxylic acid mark. Glycine 33 carries the post-translational modification Glycine amide.

It belongs to the GnRH family.

The protein localises to the secreted. Its function is as follows. Stimulates the secretion of gonadotropins. The protein is Progonadoliberin-3 (gnrh3) of Carassius auratus (Goldfish).